Here is an 86-residue protein sequence, read N- to C-terminus: Large ribosomal subunit protein bL31B (86 aa).

Belongs to the bacterial ribosomal protein bL31 family. Type B subfamily. In terms of assembly, part of the 50S ribosomal subunit.

The chain is Large ribosomal subunit protein bL31B from Cupriavidus pinatubonensis (strain JMP 134 / LMG 1197) (Cupriavidus necator (strain JMP 134)).